Reading from the N-terminus, the 149-residue chain is D-aminoacyl-tRNA deacylase (149 aa).

A Gly-cisPro motif, important for rejection of L-amino acids motif is present at residues 137-138 (GP).

This sequence belongs to the DTD family. As to quaternary structure, homodimer.

It localises to the cytoplasm. It catalyses the reaction glycyl-tRNA(Ala) + H2O = tRNA(Ala) + glycine + H(+). The enzyme catalyses a D-aminoacyl-tRNA + H2O = a tRNA + a D-alpha-amino acid + H(+). In terms of biological role, an aminoacyl-tRNA editing enzyme that deacylates mischarged D-aminoacyl-tRNAs. Also deacylates mischarged glycyl-tRNA(Ala), protecting cells against glycine mischarging by AlaRS. Acts via tRNA-based rather than protein-based catalysis; rejects L-amino acids rather than detecting D-amino acids in the active site. By recycling D-aminoacyl-tRNA to D-amino acids and free tRNA molecules, this enzyme counteracts the toxicity associated with the formation of D-aminoacyl-tRNA entities in vivo and helps enforce protein L-homochirality. The protein is D-aminoacyl-tRNA deacylase of Syntrophotalea carbinolica (strain DSM 2380 / NBRC 103641 / GraBd1) (Pelobacter carbinolicus).